A 347-amino-acid chain; its full sequence is MASLLCLFFSLLGLAAIGAVKNCHPQCRCEVETFGLFDSFSLTKVDCSRIGPGNTPVPIPLDTSHLDLSLNSTTSISDTMLSGPGYTTLVSLDLSSNLIAQISPKAFSKLRYLETLDLSSNALEGLSDGCFTGLPLVELDLSENQFKEFNLDLFTTRTQDLPIMVDLSRNLLTSIFRRTPGHPLYIKSLMLAGNQLKTVPKLNGIPLQYLNLDGNLISSIDTGAFDSLTELVHLSLSGLSELTLIHPGAFRSLKNLQALDLSNNSQLKTLNPNVFSGLVSLQELNLSNTAVTPLSRTVFMQMPNIKSITLGPNVHCWKTHMQGQFHRQIGQAKPNDILTCDNAGLIL.

Residues 1 to 19 form the signal peptide; sequence MASLLCLFFSLLGLAAIGA. In terms of domain architecture, LRRNT spans 20–61; it reads VKNCHPQCRCEVETFGLFDSFSLTKVDCSRIGPGNTPVPIPL. 10 LRR repeats span residues 62–83, 88–109, 112–133, 135–156, 160–175, 185–205, 206–227, 230–252, 255–277, and 280–301; these read DTSH…MLSG, TLVS…AFSK, YLET…CFTG, PLVE…LFTT, DLPI…LTSI, YIKS…LNGI, PLQY…AFDS, ELVH…AFRS, NLQA…VFSG, and SLQE…VFMQ. Asn285 carries an N-linked (GlcNAc...) asparagine glycan.

Forms a ternary complex with chordin/CHRD and BMP4.

The protein localises to the secreted. In terms of biological role, contributes to various developmental events through its interactions with multiple signaling pathways. Dorsalizing factor which functions as an inhibitor of bone morphogenetic proteins during gastrulation. The chain is Tsukushi (tsku) from Danio rerio (Zebrafish).